The chain runs to 334 residues: Procathepsin L (334 aa).

An N-terminal signal peptide occupies residues 1-17 (MTPLLLLAVLCLGTALA). A propeptide spans 18 to 113 (TPKFDQTFNA…RLFQEPLMLQ (96 aa)) (activation peptide). Glu-122 contacts Zn(2+). 2 disulfides stabilise this stretch: Cys-135–Cys-178 and Cys-169–Cys-211. Cys-138 is an active-site residue. Residues Glu-163, Asp-184, Glu-199, Glu-205, Asp-227, Asp-250, His-253, Asp-273, and Asp-275 each coordinate Zn(2+). An intrachain disulfide couples Cys-269 to Cys-322. Residue His-276 is part of the active site. The propeptide occupies 289 to 290 (DS). The active site involves Asn-300.

It belongs to the peptidase C1 family. As to quaternary structure, dimer of a heavy and a light chain linked by disulfide bonds. Interacts with Long isoform of CD74/Ii chain; the interaction stabilizes the conformation of mature CTSL. Post-translationally, during export along the endocytic pathway, pro-CTSL undergoes several proteolytic cleavages to generate the CTSL single-chain and two-chain mature forms, composed of a heavy chain linked to a light chain by disulfide bonds. Autocleavage; produces the single-chain CTSL after cleavage of the propeptide. The cleavage can be intermolecular. In terms of tissue distribution, both mature cathepsin L1 and procathepsin L are found in the upper epidermis. The lower epidermis predominantly contains procathepsin L. In seminiferous tubules expression is greater at stages VI-VII than at stages IX-XII.

The protein localises to the lysosome. The protein resides in the apical cell membrane. It localises to the cytoplasmic vesicle. It is found in the secretory vesicle. Its subcellular location is the chromaffin granule. The protein localises to the secreted. The protein resides in the extracellular space. It carries out the reaction Specificity close to that of papain. As compared to cathepsin B, cathepsin L exhibits higher activity toward protein substrates, but has little activity on Z-Arg-Arg-NHMec, and no peptidyl-dipeptidase activity.. Inhibited by the propeptide produced by autocleavage. Long isoform of CD74/Ii chain stabilizes the conformation of mature CTSL by binding to its active site and serving as a chaperone to help maintain a pool of mature enzyme in endocytic compartments and extracellular space of APCs. IFNG enhances the conversion into the CTSL mature and active form. Inhibited by CST6. Inhibited by the glycopeptide antibiotic teicoplanin. Inhibited by amantadine. Thiol protease important for the overall degradation of proteins in lysosomes. Plays a critical for normal cellular functions such as general protein turnover, antigen processing and bone remodeling. Involved in the solubilization of cross-linked TG/thyroglobulin and in the subsequent release of thyroid hormone thyroxine (T4) by limited proteolysis of TG/thyroglobulin in the thyroid follicle lumen. In neuroendocrine chromaffin cells secretory vesicles, catalyzes the prohormone proenkephalin processing to the active enkephalin peptide neurotransmitter. In thymus, regulates CD4(+) T cell positive selection by generating the major histocompatibility complex class II (MHCII) bound peptide ligands presented by cortical thymic epithelial cells. Also mediates invariant chain processing in cortical thymic epithelial cells. Major elastin-degrading enzyme at neutral pH. Accumulates as a mature and active enzyme in the extracellular space of antigen presenting cells (APCs) to regulate degradation of the extracellular matrix in the course of inflammation. Secreted form generates endostatin from COL18A1. Critical for cardiac morphology and function. Plays an important role in hair follicle morphogenesis and cycling, as well as epidermal differentiation. Required for maximal stimulation of steroidogenesis by TIMP1. In Rattus norvegicus (Rat), this protein is Procathepsin L.